Reading from the N-terminus, the 463-residue chain is MATLTNLEPLATGTVILKTTRGDIQIELWCKEVPKACRNFIQLCLEGYYDGTIVHRVVPEFLIQGGDPTGTGMGGESIYGEPFAVETHPRLRFIRRGLVGMACTENEGNNSQFFITLGPTPEWNGKQTLFGRVVGDTIYNVVRISELELDANQRPVFPPKIISTEVIDNYFTDIKPRSTKEEREKIANELAHQEKQKERNKLLKSGRRNKAVLSFGDEVDMPIVKKPLRQKTPVSRSSDTTTELSKDLISSSSSIHSTYSSAQTGLTSAKVSSDEYARQVDTLDTKLNSSSKSKVQEEISRLKSELRDLEKSGGSSNSKPVVVRPKKRNILTEELEKYKKSKKVVLGKRKNLENDEESTLRALSSFQSKIRNAEDEDVMDSQYGSKIEDTPCSLHNVPGCFSCFDRLGEKNITETNSNWFAHRLVAENDPTRRTEELRIQRAEELKDVPSARPKKLLMKRDII.

The 156-residue stretch at 11-166 (ATGTVILKTT…FPPKIISTEV (156 aa)) folds into the PPIase cyclophilin-type domain. A disordered region spans residues 224–275 (VKKPLRQKTPVSRSSDTTTELSKDLISSSSSIHSTYSSAQTGLTSAKVSSDE). Residues 232-243 (TPVSRSSDTTTE) are compositionally biased toward polar residues. Over residues 250–261 (SSSSSIHSTYSS) the composition is skewed to low complexity. A compositionally biased stretch (polar residues) spans 262–271 (AQTGLTSAKV).

The protein belongs to the cyclophilin-type PPIase family. CWC27 subfamily. In terms of assembly, belongs to the 40S cdc5-associated complex (or cwf complex), a spliceosome sub-complex reminiscent of a late-stage spliceosome composed of the U2, U5 and U6 snRNAs and at least brr2, cdc5, cwf2/prp3, cwf3/syf1, cwf4/syf3, cwf5/ecm2, spp42/cwf6, cwf7/spf27, cwf8, cwf9, cwf10, cwf11, cwf12, prp45/cwf13, cwf14, cwf15, cwf16, cwf17, cwf18, cwf19, cwf20, cwf21, cwf22, cwf23, cwf24, cwf25, cwf26, cyp7/cwf27, cwf28, cwf29/ist3, lea1, msl1, prp5/cwf1, prp10, prp12/sap130, prp17, prp22, sap61, sap62, sap114, sap145, slu7, smb1, smd1, smd3, smf1, smg1 and syf2.

The protein localises to the cytoplasm. The protein resides in the nucleus. The enzyme catalyses [protein]-peptidylproline (omega=180) = [protein]-peptidylproline (omega=0). In terms of biological role, PPIases accelerate the folding of proteins. Catalyzes the cis-trans isomerization of proline imidic peptide bonds in oligopeptides. Involved in pre-mRNA splicing. The chain is Peptidylprolyl isomerase cyp7 (cyp7) from Schizosaccharomyces pombe (strain 972 / ATCC 24843) (Fission yeast).